The chain runs to 250 residues: Large ribosomal subunit protein uL29m (250 aa).

The residue at position 144 (lysine 144) is an N6-acetyllysine.

This sequence belongs to the universal ribosomal protein uL29 family. In terms of assembly, component of the mitochondrial large ribosomal subunit (mt-LSU). Mature mammalian 55S mitochondrial ribosomes consist of a small (28S) and a large (39S) subunit. The 28S small subunit contains a 12S ribosomal RNA (12S mt-rRNA) and 30 different proteins. The 39S large subunit contains a 16S rRNA (16S mt-rRNA), a copy of mitochondrial valine transfer RNA (mt-tRNA(Val)), which plays an integral structural role, and 52 different proteins.

It localises to the mitochondrion. This is Large ribosomal subunit protein uL29m (MRPL47) from Homo sapiens (Human).